A 239-amino-acid chain; its full sequence is Ribonuclease PH (239 aa).

Residues arginine 87 and 125-127 each bind phosphate; that span reads GTR.

It belongs to the RNase PH family. In terms of assembly, homohexameric ring arranged as a trimer of dimers.

It carries out the reaction tRNA(n+1) + phosphate = tRNA(n) + a ribonucleoside 5'-diphosphate. Functionally, phosphorolytic 3'-5' exoribonuclease that plays an important role in tRNA 3'-end maturation. Removes nucleotide residues following the 3'-CCA terminus of tRNAs; can also add nucleotides to the ends of RNA molecules by using nucleoside diphosphates as substrates, but this may not be physiologically important. Probably plays a role in initiation of 16S rRNA degradation (leading to ribosome degradation) during starvation. The chain is Ribonuclease PH from Ectopseudomonas mendocina (strain ymp) (Pseudomonas mendocina).